A 1058-amino-acid polypeptide reads, in one-letter code: Carbamoyl phosphate synthase large chain (1058 aa).

Residues 1–401 form a carboxyphosphate synthetic domain region; it reads MPKRKDIQKI…SLLKACRSLE (401 aa). ATP-binding residues include Arg-129, Arg-169, Gly-175, Gly-176, Arg-208, Ile-210, Glu-215, Gly-241, Ile-242, His-243, Gln-284, and Glu-298. The ATP-grasp 1 domain maps to 133–327; sequence KQLMQELDQP…IAKLAAKIAV (195 aa). Gln-284, Glu-298, and Asn-300 together coordinate Mg(2+). 3 residues coordinate Mn(2+): Gln-284, Glu-298, and Asn-300. An oligomerization domain region spans residues 402–546; that stretch reads IGVCHNEMTS…YSTYELENES (145 aa). Residues 547–929 form a carbamoyl phosphate synthetic domain region; sequence VQSNKESILV…ALYKAFEANN (383 aa). Residues 671–861 enclose the ATP-grasp 2 domain; that stretch reads EKALKELGIP…MAQIATKLIL (191 aa). ATP contacts are provided by Arg-707, Ser-746, Ile-748, Glu-752, Gly-777, Val-778, His-779, Ser-780, Gln-820, and Glu-832. Residues Gln-820, Glu-832, and Asn-834 each coordinate Mg(2+). 3 residues coordinate Mn(2+): Gln-820, Glu-832, and Asn-834. The region spanning 930–1058 is the MGS-like domain; the sequence is SHLSEFGQIV…ESRCFNIEAI (129 aa). Residues 930 to 1058 form an allosteric domain region; that stretch reads SHLSEFGQIV…ESRCFNIEAI (129 aa).

This sequence belongs to the CarB family. As to quaternary structure, composed of two chains; the small (or glutamine) chain promotes the hydrolysis of glutamine to ammonia, which is used by the large (or ammonia) chain to synthesize carbamoyl phosphate. Tetramer of heterodimers (alpha,beta)4. It depends on Mg(2+) as a cofactor. Mn(2+) is required as a cofactor.

The catalysed reaction is hydrogencarbonate + L-glutamine + 2 ATP + H2O = carbamoyl phosphate + L-glutamate + 2 ADP + phosphate + 2 H(+). It carries out the reaction hydrogencarbonate + NH4(+) + 2 ATP = carbamoyl phosphate + 2 ADP + phosphate + 2 H(+). The protein operates within amino-acid biosynthesis; L-arginine biosynthesis; carbamoyl phosphate from bicarbonate: step 1/1. It participates in pyrimidine metabolism; UMP biosynthesis via de novo pathway; (S)-dihydroorotate from bicarbonate: step 1/3. Functionally, large subunit of the glutamine-dependent carbamoyl phosphate synthetase (CPSase). CPSase catalyzes the formation of carbamoyl phosphate from the ammonia moiety of glutamine, carbonate, and phosphate donated by ATP, constituting the first step of 2 biosynthetic pathways, one leading to arginine and/or urea and the other to pyrimidine nucleotides. The large subunit (synthetase) binds the substrates ammonia (free or transferred from glutamine from the small subunit), hydrogencarbonate and ATP and carries out an ATP-coupled ligase reaction, activating hydrogencarbonate by forming carboxy phosphate which reacts with ammonia to form carbamoyl phosphate. This is Carbamoyl phosphate synthase large chain from Streptococcus pyogenes serotype M18 (strain MGAS8232).